A 229-amino-acid chain; its full sequence is Cytochrome c oxidase subunit 2 (229 aa).

The Mitochondrial intermembrane segment spans residues Met1–His26. The helical transmembrane segment at Ala27–Asn48 threads the bilayer. Topologically, residues Ser49–Glu62 are mitochondrial matrix. A helical transmembrane segment spans residues Met63–Arg82. Residues Leu83–Ser229 lie on the Mitochondrial intermembrane side of the membrane. The Cu cation site is built by His161, Cys196, Glu198, Cys200, His204, and Met207. Glu198 lines the Mg(2+) pocket.

This sequence belongs to the cytochrome c oxidase subunit 2 family. As to quaternary structure, component of the cytochrome c oxidase (complex IV, CIV), a multisubunit enzyme composed of a catalytic core of 3 subunits and several supernumerary subunits. The complex exists as a monomer or a dimer and forms supercomplexes (SCs) in the inner mitochondrial membrane with ubiquinol-cytochrome c oxidoreductase (cytochrome b-c1 complex, complex III, CIII). Requires Cu cation as cofactor.

It localises to the mitochondrion inner membrane. It catalyses the reaction 4 Fe(II)-[cytochrome c] + O2 + 8 H(+)(in) = 4 Fe(III)-[cytochrome c] + 2 H2O + 4 H(+)(out). In terms of biological role, component of the cytochrome c oxidase, the last enzyme in the mitochondrial electron transport chain which drives oxidative phosphorylation. The respiratory chain contains 3 multisubunit complexes succinate dehydrogenase (complex II, CII), ubiquinol-cytochrome c oxidoreductase (cytochrome b-c1 complex, complex III, CIII) and cytochrome c oxidase (complex IV, CIV), that cooperate to transfer electrons derived from NADH and succinate to molecular oxygen, creating an electrochemical gradient over the inner membrane that drives transmembrane transport and the ATP synthase. Cytochrome c oxidase is the component of the respiratory chain that catalyzes the reduction of oxygen to water. Electrons originating from reduced cytochrome c in the intermembrane space (IMS) are transferred via the dinuclear copper A center (CU(A)) of subunit 2 and heme A of subunit 1 to the active site in subunit 1, a binuclear center (BNC) formed by heme A3 and copper B (CU(B)). The BNC reduces molecular oxygen to 2 water molecules using 4 electrons from cytochrome c in the IMS and 4 protons from the mitochondrial matrix. This Drosophila lowei (Fruit fly) protein is Cytochrome c oxidase subunit 2 (mt:CoII).